The sequence spans 130 residues: Single-stranded DNA-binding protein 1 (130 aa).

Positions 1–104 constitute an SSB domain; it reads MINNVVLIGR…VVAESFQILE (104 aa). A disordered region spans residues 108 to 130; it reads NTANTSSLADSMPDYGPEPDLPF.

Homotetramer.

The polypeptide is Single-stranded DNA-binding protein 1 (ssb1) (Streptococcus pyogenes serotype M18 (strain MGAS8232)).